Here is a 462-residue protein sequence, read N- to C-terminus: Hydroxymethylglutaryl-CoA synthase (462 aa).

Glutamate 92 (proton donor/acceptor) is an active-site residue. Cysteine 124 serves as the catalytic Acyl-thioester intermediate. (3S)-3-hydroxy-3-methylglutaryl-CoA contacts are provided by cysteine 124, threonine 167, serine 219, histidine 257, lysine 266, asparagine 327, and serine 360. The active-site Proton donor/acceptor is the histidine 257. Residue lysine 408 forms a Glycyl lysine isopeptide (Lys-Gly) (interchain with G-Cter in SUMO) linkage.

The protein belongs to the thiolase-like superfamily. HMG-CoA synthase family. Post-translationally, ubiquitinated.

The enzyme catalyses acetoacetyl-CoA + acetyl-CoA + H2O = (3S)-3-hydroxy-3-methylglutaryl-CoA + CoA + H(+). It functions in the pathway metabolic intermediate biosynthesis; (R)-mevalonate biosynthesis; (R)-mevalonate from acetyl-CoA: step 2/3. In terms of biological role, this enzyme condenses acetyl-CoA with acetoacetyl-CoA to form HMG-CoA, which is the substrate for HMG-CoA reductase. This Caenorhabditis elegans protein is Hydroxymethylglutaryl-CoA synthase.